Reading from the N-terminus, the 937-residue chain is Translation initiation factor IF-2 (937 aa).

Positions 47-352 are disordered; it reads RAAFQTKATP…EMPQRKERPL (306 aa). Low complexity predominate over residues 52–68; sequence TKATPAASKPATPAAPK. The span at 97-116 shows a compositional bias: polar residues; that stretch reads QHSNNRPQANANRNGQASNG. Residues 117–153 show a composition bias toward low complexity; that stretch reads QNRTNNARPNNNSARPNNSRPNTNSRPNNNSQNRSTS. The span at 154–169 shows a compositional bias: polar residues; the sequence is ANHPMSLQEQISQANA. Residues 173-197 are compositionally biased toward basic and acidic residues; sequence RTQERIQQQREQREADEKKRREQAN. Residues 202-229 are compositionally biased toward polar residues; that stretch reads TRNNASNNRPSNGKPTNGARPTTNSPRP. Low complexity predominate over residues 240 to 269; it reads SSRPNNNNSARPNTTNNRPTNSRPATTPSR. Polar residues predominate over residues 274–298; that stretch reads QEMQQKMQANTVSASKPASNNTASK. A compositionally biased stretch (basic residues) spans 322 to 331; the sequence is FNKKRKKTRK. A compositionally biased stretch (basic and acidic residues) spans 339 to 352; it reads AAKKEMPQRKERPL. The region spanning 438-607 is the tr-type G domain; the sequence is SRPPVVTIMG…LLEADVLELK (170 aa). Residues 447–454 form a G1 region; the sequence is GHVDHGKT. A GTP-binding site is contributed by 447-454; the sequence is GHVDHGKT. The interval 472–476 is G2; the sequence is GITQH. The G3 stretch occupies residues 493–496; it reads DTPG. Residues 493 to 497 and 547 to 550 contribute to the GTP site; these read DTPGH and NKID. The interval 547–550 is G4; the sequence is NKID. The tract at residues 583–585 is G5; it reads SAK.

This sequence belongs to the TRAFAC class translation factor GTPase superfamily. Classic translation factor GTPase family. IF-2 subfamily.

The protein resides in the cytoplasm. Its function is as follows. One of the essential components for the initiation of protein synthesis. Protects formylmethionyl-tRNA from spontaneous hydrolysis and promotes its binding to the 30S ribosomal subunits. Also involved in the hydrolysis of GTP during the formation of the 70S ribosomal complex. In Latilactobacillus sakei subsp. sakei (strain 23K) (Lactobacillus sakei subsp. sakei), this protein is Translation initiation factor IF-2.